A 177-amino-acid chain; its full sequence is Peptide methionine sulfoxide reductase MsrA (177 aa).

The active site involves cysteine 15.

It belongs to the MsrA Met sulfoxide reductase family.

The catalysed reaction is L-methionyl-[protein] + [thioredoxin]-disulfide + H2O = L-methionyl-(S)-S-oxide-[protein] + [thioredoxin]-dithiol. It carries out the reaction [thioredoxin]-disulfide + L-methionine + H2O = L-methionine (S)-S-oxide + [thioredoxin]-dithiol. Has an important function as a repair enzyme for proteins that have been inactivated by oxidation. Catalyzes the reversible oxidation-reduction of methionine sulfoxide in proteins to methionine. The chain is Peptide methionine sulfoxide reductase MsrA from Listeria monocytogenes serotype 4b (strain CLIP80459).